The sequence spans 456 residues: Bifunctional protein GlmU (456 aa).

A pyrophosphorylase region spans residues 1–229 (MSNSAMSVVI…LSEVEGVNNR (229 aa)). Residues 11–14 (LAAG), lysine 25, glutamine 76, 81–82 (GT), 103–105 (YGD), glycine 140, glutamate 154, asparagine 169, and asparagine 227 contribute to the UDP-N-acetyl-alpha-D-glucosamine site. Aspartate 105 contacts Mg(2+). Position 227 (asparagine 227) interacts with Mg(2+). Positions 230 to 250 (LQLSRLERIYQAEQSEKLLLA) are linker. Residues 251 to 456 (GVMLLDPARF…QGWQRPVKKK (206 aa)) are N-acetyltransferase. UDP-N-acetyl-alpha-D-glucosamine is bound by residues arginine 333 and lysine 351. The active-site Proton acceptor is histidine 363. UDP-N-acetyl-alpha-D-glucosamine is bound by residues tyrosine 366 and asparagine 377. Acetyl-CoA is bound by residues alanine 380, 386–387 (NY), serine 405, alanine 423, and arginine 440.

In the N-terminal section; belongs to the N-acetylglucosamine-1-phosphate uridyltransferase family. This sequence in the C-terminal section; belongs to the transferase hexapeptide repeat family. Homotrimer. Mg(2+) serves as cofactor.

It localises to the cytoplasm. The enzyme catalyses alpha-D-glucosamine 1-phosphate + acetyl-CoA = N-acetyl-alpha-D-glucosamine 1-phosphate + CoA + H(+). The catalysed reaction is N-acetyl-alpha-D-glucosamine 1-phosphate + UTP + H(+) = UDP-N-acetyl-alpha-D-glucosamine + diphosphate. It participates in nucleotide-sugar biosynthesis; UDP-N-acetyl-alpha-D-glucosamine biosynthesis; N-acetyl-alpha-D-glucosamine 1-phosphate from alpha-D-glucosamine 6-phosphate (route II): step 2/2. The protein operates within nucleotide-sugar biosynthesis; UDP-N-acetyl-alpha-D-glucosamine biosynthesis; UDP-N-acetyl-alpha-D-glucosamine from N-acetyl-alpha-D-glucosamine 1-phosphate: step 1/1. It functions in the pathway bacterial outer membrane biogenesis; LPS lipid A biosynthesis. In terms of biological role, catalyzes the last two sequential reactions in the de novo biosynthetic pathway for UDP-N-acetylglucosamine (UDP-GlcNAc). The C-terminal domain catalyzes the transfer of acetyl group from acetyl coenzyme A to glucosamine-1-phosphate (GlcN-1-P) to produce N-acetylglucosamine-1-phosphate (GlcNAc-1-P), which is converted into UDP-GlcNAc by the transfer of uridine 5-monophosphate (from uridine 5-triphosphate), a reaction catalyzed by the N-terminal domain. The sequence is that of Bifunctional protein GlmU from Serratia proteamaculans (strain 568).